The following is a 297-amino-acid chain: Undecaprenyl-diphosphatase 3 (297 aa).

6 helical membrane-spanning segments follow: residues 39–59 (PGAAFTAVTQIGTETAVLIYF), 89–109 (WLVLLGTIPIGLLGVTLQDAI), 118–138 (LIATTLIVLGLILGGADWYAS), 203–223 (FLLAMPAVLASGVFELKSIGG), 237–257 (PTIVATVVAFATGYAAIAWFL), and 268–288 (FVLYRVALGLLLLALLAGGAI).

The protein belongs to the UppP family.

The protein resides in the cell membrane. It carries out the reaction di-trans,octa-cis-undecaprenyl diphosphate + H2O = di-trans,octa-cis-undecaprenyl phosphate + phosphate + H(+). Catalyzes the dephosphorylation of undecaprenyl diphosphate (UPP). Confers resistance to bacitracin. In Frankia alni (strain DSM 45986 / CECT 9034 / ACN14a), this protein is Undecaprenyl-diphosphatase 3.